Reading from the N-terminus, the 241-residue chain is UPF0280 protein MK0206 (241 aa).

It belongs to the UPF0280 family.

The sequence is that of UPF0280 protein MK0206 from Methanopyrus kandleri (strain AV19 / DSM 6324 / JCM 9639 / NBRC 100938).